The primary structure comprises 320 residues: Iminosuccinate reductase (320 aa).

Lysine 67 functions as the Proton donor/acceptor in the catalytic mechanism. NAD(+) is bound by residues arginine 110, 137–138, asparagine 159, serine 199, 219–222, lysine 226, and glycine 291; these read HQ and MGTD.

Belongs to the ornithine cyclodeaminase/mu-crystallin family. BhcD subfamily.

The catalysed reaction is L-aspartate + NAD(+) = iminosuccinate + NADH + H(+). In terms of biological role, imine reductase that catalyzes the NADH-dependent reduction of iminosuccinate to L-aspartate. Is essential for the growth of P.denitrificans in the presence of glycolate and glyoxylate since it functions in glyoxylate assimilation via the beta-hydroxyaspartate cycle (BHAC). Thereby BhcD regenerates the amino group donor for the first step of the BHAC. This is Iminosuccinate reductase from Paracoccus denitrificans (strain Pd 1222).